We begin with the raw amino-acid sequence, 267 residues long: Protein LicA (267 aa).

The protein belongs to the peptidase S49 family.

Mediates phase variation of the LPS epitopes. Phase variation of H.influenza LPS epitopes expressed by LicA is determined by a translational switch. This chain is Protein LicA (licA), found in Haemophilus influenzae (strain ATCC 51907 / DSM 11121 / KW20 / Rd).